Here is a 229-residue protein sequence, read N- to C-terminus: NAD(P)H-hydrate epimerase (229 aa).

Residues 9–216 (AISVDEELFN…KLEEKYAMNL (208 aa)) form the YjeF N-terminal domain. 59 to 63 (NNGGD) provides a ligand contact to (6S)-NADPHX. Asn60 and Asp124 together coordinate K(+). (6S)-NADPHX contacts are provided by residues 128–134 (GFSFKPP) and Asp157. Ser160 lines the K(+) pocket.

The protein belongs to the NnrE/AIBP family. Requires K(+) as cofactor.

It carries out the reaction (6R)-NADHX = (6S)-NADHX. It catalyses the reaction (6R)-NADPHX = (6S)-NADPHX. In terms of biological role, catalyzes the epimerization of the S- and R-forms of NAD(P)HX, a damaged form of NAD(P)H that is a result of enzymatic or heat-dependent hydration. This is a prerequisite for the S-specific NAD(P)H-hydrate dehydratase to allow the repair of both epimers of NAD(P)HX. The polypeptide is NAD(P)H-hydrate epimerase (Anopheles gambiae (African malaria mosquito)).